The sequence spans 2280 residues: Metacaspase-3 (2280 aa).

Disordered stretches follow at residues 56 to 83 (ILSKGKKNKNENIKKRINEKDNDTDRED), 202 to 284 (YSTE…THRG), 791 to 819 (YKNSMNSNDDIQNSNNNNNNNNNNNMVNN), 931 to 954 (DDNSVQDSFFSRTERSNSQNRYDK), 994 to 1015 (SGKYQRNIPQNDDNDHNDDDSE), 1278 to 1306 (KTNNKTNSNYSSNNNNDNNNNNNNSNPFI), and 1469 to 1500 (KAPTNVKAPTNVKAPTNVNAPTNVNAPTNANA). Basic and acidic residues predominate over residues 63–83 (NKNENIKKRINEKDNDTDRED). 2 stretches are compositionally biased toward polar residues: residues 205 to 219 (EHTQSIDNNNITSKR) and 228 to 278 (DKAQ…NRKG). Composition is skewed to low complexity over residues 793–819 (NSMNSNDDIQNSNNNNNNNNNNNMVNN) and 931–941 (DDNSVQDSFFS). Composition is skewed to low complexity over residues 1278–1303 (KTNNKTNSNYSSNNNNDNNNNNNNSN) and 1482–1500 (APTNVNAPTNVNAPTNANA).

The protein belongs to the peptidase C14B family.

Functionally, protease that cleaves specifically after arginine or lysine residues. The chain is Metacaspase-3 from Plasmodium falciparum (isolate 3D7).